The sequence spans 134 residues: Putative pre-16S rRNA nuclease (134 aa).

The protein belongs to the YqgF nuclease family.

It is found in the cytoplasm. In terms of biological role, could be a nuclease involved in processing of the 5'-end of pre-16S rRNA. In Helicobacter pylori (strain G27), this protein is Putative pre-16S rRNA nuclease.